We begin with the raw amino-acid sequence, 231 residues long: Large ribosomal subunit protein uL1 (231 aa).

This sequence belongs to the universal ribosomal protein uL1 family. In terms of assembly, part of the 50S ribosomal subunit.

Functionally, binds directly to 23S rRNA. The L1 stalk is quite mobile in the ribosome, and is involved in E site tRNA release. Its function is as follows. Protein L1 is also a translational repressor protein, it controls the translation of the L11 operon by binding to its mRNA. This is Large ribosomal subunit protein uL1 from Pseudomonas fluorescens (strain ATCC BAA-477 / NRRL B-23932 / Pf-5).